Reading from the N-terminus, the 428-residue chain is Adenylosuccinate synthetase (428 aa).

GTP is bound by residues 12-18 (GDEGKGK) and 40-42 (GHT). The Proton acceptor role is filled by Asp13. Mg(2+) contacts are provided by Asp13 and Gly40. IMP-binding positions include 13 to 16 (DEGK), 38 to 41 (NAGH), Thr128, Arg142, Gln223, Thr238, and Arg302. Catalysis depends on His41, which acts as the Proton donor. 298 to 304 (VTTGRPR) serves as a coordination point for substrate. GTP is bound by residues Arg304, 330–332 (KLD), and 412–414 (GVG).

The protein belongs to the adenylosuccinate synthetase family. Homodimer. Mg(2+) serves as cofactor.

It is found in the cytoplasm. It catalyses the reaction IMP + L-aspartate + GTP = N(6)-(1,2-dicarboxyethyl)-AMP + GDP + phosphate + 2 H(+). The protein operates within purine metabolism; AMP biosynthesis via de novo pathway; AMP from IMP: step 1/2. Functionally, plays an important role in the de novo pathway of purine nucleotide biosynthesis. Catalyzes the first committed step in the biosynthesis of AMP from IMP. This is Adenylosuccinate synthetase from Halothermothrix orenii (strain H 168 / OCM 544 / DSM 9562).